Reading from the N-terminus, the 325-residue chain is DNA-directed RNA polymerase subunit alpha (325 aa).

Residues 1–238 (MSPKNLLKGF…DHLTVFINFE (238 aa)) form an alpha N-terminal domain (alpha-NTD) region. Positions 255 to 325 (LKAALSKHVE…MGLSFGMRDF (71 aa)) are alpha C-terminal domain (alpha-CTD).

It belongs to the RNA polymerase alpha chain family. Homodimer. The RNAP catalytic core consists of 2 alpha, 1 beta, 1 beta' and 1 omega subunit. When a sigma factor is associated with the core the holoenzyme is formed, which can initiate transcription.

The enzyme catalyses RNA(n) + a ribonucleoside 5'-triphosphate = RNA(n+1) + diphosphate. DNA-dependent RNA polymerase catalyzes the transcription of DNA into RNA using the four ribonucleoside triphosphates as substrates. This chain is DNA-directed RNA polymerase subunit alpha, found in Leptospira biflexa serovar Patoc (strain Patoc 1 / Ames).